The chain runs to 546 residues: MQSSTYAVKGNAAFAFQRRTFSSDRSTTSTGIRFAGYKSLATTGPLYCSGSEAMGATLARADNGIQSVMSFSSVKARSVRAQASSDGDEEEAIPLRSEGKSSGTVLPFVGVACLGAILFGYHLGVVNGALEYLAKDLGIAENTVLQGWIVSSLLAGATVGSFTGGALADKFGRTRTFQLDAIPLAIGAFLCATAQSVQTMIVGRLLAGIGIGISSAIVPLYISEISPTEIRGALGSVNQLFICIGILAALIAGLPLAANPLWWRTMFGVAVIPSVLLAIGMAFSPESPRWLVQQGKVSEAEKAIKTLYGKERVVELVRDLSASGQGSSEPEAGWFDLFSSRYWKVVSVGAALFLFQQLAGINAVVYYSTSVFRSAGIQSDVAASALVGASNVFGTAVASSLMDKMGRKSLLLTSFGGMALSMLLLSLSFTWKALAAYSGTLAVVGTVLYVLSFSLGAGPVPALLLPEIFASRIRAKAVALSLGMHWISNFVIGLYFLSVVTKFGISSVYLGFAGVCVLAVLYIAGNVVETKGRSLEEIELALTSGA.

12 consecutive transmembrane segments (helical) span residues 105-125, 148-168, 182-202, 205-225, 240-260, 265-285, 345-365, 381-401, 410-430, 441-461, 477-497, and 503-523; these read VLPF…HLGV, WIVS…GALA, IPLA…TMIV, LLAG…ISEI, LFIC…AANP, TMFG…AFSP, VVSV…NAVV, VAAS…ASSL, LLLT…LSFT, LAVV…GPVP, AVAL…LYFL, and FGIS…VLYI.

The protein belongs to the major facilitator superfamily. Sugar transporter (TC 2.A.1.1) family.

Its subcellular location is the plastid. The protein localises to the chloroplast inner membrane. Its function is as follows. May be involved in the efflux of glucose towards the cytosol. In Arabidopsis thaliana (Mouse-ear cress), this protein is Plastidic glucose transporter 4.